The chain runs to 262 residues: Indole-3-glycerol phosphate synthase (262 aa).

The protein belongs to the TrpC family.

It carries out the reaction 1-(2-carboxyphenylamino)-1-deoxy-D-ribulose 5-phosphate + H(+) = (1S,2R)-1-C-(indol-3-yl)glycerol 3-phosphate + CO2 + H2O. It participates in amino-acid biosynthesis; L-tryptophan biosynthesis; L-tryptophan from chorismate: step 4/5. This chain is Indole-3-glycerol phosphate synthase, found in Bordetella avium (strain 197N).